The chain runs to 152 residues: SsrA-binding protein (152 aa).

It belongs to the SmpB family.

The protein localises to the cytoplasm. Required for rescue of stalled ribosomes mediated by trans-translation. Binds to transfer-messenger RNA (tmRNA), required for stable association of tmRNA with ribosomes. tmRNA and SmpB together mimic tRNA shape, replacing the anticodon stem-loop with SmpB. tmRNA is encoded by the ssrA gene; the 2 termini fold to resemble tRNA(Ala) and it encodes a 'tag peptide', a short internal open reading frame. During trans-translation Ala-aminoacylated tmRNA acts like a tRNA, entering the A-site of stalled ribosomes, displacing the stalled mRNA. The ribosome then switches to translate the ORF on the tmRNA; the nascent peptide is terminated with the 'tag peptide' encoded by the tmRNA and targeted for degradation. The ribosome is freed to recommence translation, which seems to be the essential function of trans-translation. In Rickettsia peacockii (strain Rustic), this protein is SsrA-binding protein.